The following is a 364-amino-acid chain: Peroxidase (364 aa).

Residues 1 to 20 (MKLSLFSTFAAVIIGALALP) form the signal peptide. A Pyrrolidone carboxylic acid modification is found at glutamine 21. 4 cysteine pairs are disulfide-bonded: cysteine 32/cysteine 44, cysteine 43/cysteine 313, cysteine 63/cysteine 149, and cysteine 277/cysteine 342. Catalysis depends on histidine 76, which acts as the Proton acceptor. Residues aspartate 77, glycine 95, aspartate 97, and serine 99 each coordinate Ca(2+). N-linked (GlcNAc...) (high mannose) asparagine glycosylation occurs at asparagine 163. Histidine 204 provides a ligand contact to heme b. Ca(2+) is bound by residues serine 205, aspartate 222, threonine 224, valine 227, and aspartate 229.

The protein belongs to the peroxidase family. Ligninase subfamily. Requires Ca(2+) as cofactor. Heme b serves as cofactor.

The protein localises to the secreted. The catalysed reaction is 2 a phenolic donor + H2O2 = 2 a phenolic radical donor + 2 H2O. The sequence is that of Peroxidase from Arthromyces ramosus.